Reading from the N-terminus, the 211-residue chain is Urease accessory protein UreG (211 aa).

16-23 (GPVGSGKT) serves as a coordination point for GTP.

It belongs to the SIMIBI class G3E GTPase family. UreG subfamily. Homodimer. UreD, UreF and UreG form a complex that acts as a GTP-hydrolysis-dependent molecular chaperone, activating the urease apoprotein by helping to assemble the nickel containing metallocenter of UreC. The UreE protein probably delivers the nickel.

Its subcellular location is the cytoplasm. In terms of biological role, facilitates the functional incorporation of the urease nickel metallocenter. This process requires GTP hydrolysis, probably effectuated by UreG. This Janthinobacterium sp. (strain Marseille) (Minibacterium massiliensis) protein is Urease accessory protein UreG.